The following is a 1368-amino-acid chain: DNA-directed RNA polymerase subunit beta (1368 aa).

Belongs to the RNA polymerase beta chain family. As to quaternary structure, the RNAP catalytic core consists of 2 alpha, 1 beta, 1 beta' and 1 omega subunit. When a sigma factor is associated with the core the holoenzyme is formed, which can initiate transcription.

It catalyses the reaction RNA(n) + a ribonucleoside 5'-triphosphate = RNA(n+1) + diphosphate. Its function is as follows. DNA-dependent RNA polymerase catalyzes the transcription of DNA into RNA using the four ribonucleoside triphosphates as substrates. The chain is DNA-directed RNA polymerase subunit beta from Burkholderia ambifaria (strain MC40-6).